The primary structure comprises 274 residues: Ribosomal RNA small subunit methyltransferase A (274 aa).

6 residues coordinate S-adenosyl-L-methionine: His15, Leu17, Gly42, Glu64, Asp89, and Asn109.

Belongs to the class I-like SAM-binding methyltransferase superfamily. rRNA adenine N(6)-methyltransferase family. RsmA subfamily.

It localises to the cytoplasm. The catalysed reaction is adenosine(1518)/adenosine(1519) in 16S rRNA + 4 S-adenosyl-L-methionine = N(6)-dimethyladenosine(1518)/N(6)-dimethyladenosine(1519) in 16S rRNA + 4 S-adenosyl-L-homocysteine + 4 H(+). Functionally, specifically dimethylates two adjacent adenosines (A1518 and A1519) in the loop of a conserved hairpin near the 3'-end of 16S rRNA in the 30S particle. May play a critical role in biogenesis of 30S subunits. The sequence is that of Ribosomal RNA small subunit methyltransferase A from Synechococcus sp. (strain RCC307).